The sequence spans 105 residues: Large ribosomal subunit protein uL24 (105 aa).

This sequence belongs to the universal ribosomal protein uL24 family. In terms of assembly, part of the 50S ribosomal subunit.

Its function is as follows. One of two assembly initiator proteins, it binds directly to the 5'-end of the 23S rRNA, where it nucleates assembly of the 50S subunit. In terms of biological role, one of the proteins that surrounds the polypeptide exit tunnel on the outside of the subunit. This chain is Large ribosomal subunit protein uL24, found in Mycobacterium avium (strain 104).